A 297-amino-acid polypeptide reads, in one-letter code: 32 kDa beta-galactoside-binding lectin lec-3 (297 aa).

Galectin domains follow at residues Tyr-11 to Gly-142 and Glu-151 to Val-290. An a beta-D-galactoside-binding site is contributed by Trp-224–Glu-230.

Its function is as follows. Binds galactose. The chain is 32 kDa beta-galactoside-binding lectin lec-3 (lec-3) from Caenorhabditis elegans.